The chain runs to 209 residues: Thiamine-phosphate synthase 1 (209 aa).

4-amino-2-methyl-5-(diphosphooxymethyl)pyrimidine is bound by residues 39–43 and Asn-74; that span reads QFREK. Asp-75 and Asp-94 together coordinate Mg(2+). Ser-112 is a 4-amino-2-methyl-5-(diphosphooxymethyl)pyrimidine binding site. 138–140 contributes to the 2-[(2R,5Z)-2-carboxy-4-methylthiazol-5(2H)-ylidene]ethyl phosphate binding site; it reads TQS. Residue Lys-141 coordinates 4-amino-2-methyl-5-(diphosphooxymethyl)pyrimidine. Residues Gly-170 and 190–191 contribute to the 2-[(2R,5Z)-2-carboxy-4-methylthiazol-5(2H)-ylidene]ethyl phosphate site; that span reads IS.

Belongs to the thiamine-phosphate synthase family. The cofactor is Mg(2+).

It catalyses the reaction 2-[(2R,5Z)-2-carboxy-4-methylthiazol-5(2H)-ylidene]ethyl phosphate + 4-amino-2-methyl-5-(diphosphooxymethyl)pyrimidine + 2 H(+) = thiamine phosphate + CO2 + diphosphate. It carries out the reaction 2-(2-carboxy-4-methylthiazol-5-yl)ethyl phosphate + 4-amino-2-methyl-5-(diphosphooxymethyl)pyrimidine + 2 H(+) = thiamine phosphate + CO2 + diphosphate. The catalysed reaction is 4-methyl-5-(2-phosphooxyethyl)-thiazole + 4-amino-2-methyl-5-(diphosphooxymethyl)pyrimidine + H(+) = thiamine phosphate + diphosphate. It participates in cofactor biosynthesis; thiamine diphosphate biosynthesis; thiamine phosphate from 4-amino-2-methyl-5-diphosphomethylpyrimidine and 4-methyl-5-(2-phosphoethyl)-thiazole: step 1/1. Condenses 4-methyl-5-(beta-hydroxyethyl)thiazole monophosphate (THZ-P) and 2-methyl-4-amino-5-hydroxymethyl pyrimidine pyrophosphate (HMP-PP) to form thiamine monophosphate (TMP). The polypeptide is Thiamine-phosphate synthase 1 (Streptococcus pneumoniae serotype 4 (strain ATCC BAA-334 / TIGR4)).